The sequence spans 620 residues: Putative ribonuclease H protein At1g65750 (620 aa).

The region spanning 456–586 (CVGWVKVNTD…ADGLANYAFS (131 aa)) is the RNase H type-1 domain. Asp465, Glu505, Asp529, and Asp578 together coordinate Mg(2+).

Mg(2+) serves as cofactor.

It carries out the reaction Endonucleolytic cleavage to 5'-phosphomonoester.. This is Putative ribonuclease H protein At1g65750 from Arabidopsis thaliana (Mouse-ear cress).